The sequence spans 466 residues: 3-isopropylmalate dehydratase large subunit (466 aa).

[4Fe-4S] cluster-binding residues include Cys-347, Cys-407, and Cys-410.

It belongs to the aconitase/IPM isomerase family. LeuC type 1 subfamily. As to quaternary structure, heterodimer of LeuC and LeuD. The cofactor is [4Fe-4S] cluster.

The enzyme catalyses (2R,3S)-3-isopropylmalate = (2S)-2-isopropylmalate. It participates in amino-acid biosynthesis; L-leucine biosynthesis; L-leucine from 3-methyl-2-oxobutanoate: step 2/4. Its function is as follows. Catalyzes the isomerization between 2-isopropylmalate and 3-isopropylmalate, via the formation of 2-isopropylmaleate. The polypeptide is 3-isopropylmalate dehydratase large subunit (Escherichia coli (strain 55989 / EAEC)).